A 530-amino-acid chain; its full sequence is Bifunctional purine biosynthesis protein PurH (530 aa).

Residues 1 to 149 form the MGS-like domain; sequence MASDFLPVHR…KNFARVAVAT (149 aa).

Belongs to the PurH family.

It carries out the reaction (6R)-10-formyltetrahydrofolate + 5-amino-1-(5-phospho-beta-D-ribosyl)imidazole-4-carboxamide = 5-formamido-1-(5-phospho-D-ribosyl)imidazole-4-carboxamide + (6S)-5,6,7,8-tetrahydrofolate. The enzyme catalyses IMP + H2O = 5-formamido-1-(5-phospho-D-ribosyl)imidazole-4-carboxamide. The protein operates within purine metabolism; IMP biosynthesis via de novo pathway; 5-formamido-1-(5-phospho-D-ribosyl)imidazole-4-carboxamide from 5-amino-1-(5-phospho-D-ribosyl)imidazole-4-carboxamide (10-formyl THF route): step 1/1. It participates in purine metabolism; IMP biosynthesis via de novo pathway; IMP from 5-formamido-1-(5-phospho-D-ribosyl)imidazole-4-carboxamide: step 1/1. The sequence is that of Bifunctional purine biosynthesis protein PurH from Xylella fastidiosa (strain M12).